The chain runs to 423 residues: Mannose-6-phosphate isomerase (423 aa).

Ala2 carries the N-acetylalanine modification. Residues Ser102 and Ser108 each carry the phosphoserine modification. Residues Gln110, His112, Glu137, and His276 each contribute to the Zn(2+) site. Residue Arg295 is part of the active site.

It belongs to the mannose-6-phosphate isomerase type 1 family. The cofactor is Zn(2+). Expressed in all tissues, but more abundant in testis.

It localises to the cytoplasm. It catalyses the reaction D-mannose 6-phosphate = D-fructose 6-phosphate. Its pathway is nucleotide-sugar biosynthesis; GDP-alpha-D-mannose biosynthesis; alpha-D-mannose 1-phosphate from D-fructose 6-phosphate: step 1/2. In terms of biological role, isomerase that catalyzes the interconversion of fructose-6-P and mannose-6-P and has a critical role in the supply of D-mannose derivatives required for many eukaryotic glycosylation reactions. This Mus musculus (Mouse) protein is Mannose-6-phosphate isomerase.